Here is a 198-residue protein sequence, read N- to C-terminus: E3 ubiquitin-protein ligase rnf152 (198 aa).

The RING-type zinc-finger motif lies at 12–55; that stretch reads CQICFNYFSQRRLPKLLHCQHTCCSVCLSQMRLSQREIRCPWCR. The helical transmembrane segment at 162 to 182 threads the bilayer; it reads TGVCTVLLVAFILIFLLGIVL.

Belongs to the RNF152 family.

It is found in the lysosome membrane. The enzyme catalyses S-ubiquitinyl-[E2 ubiquitin-conjugating enzyme]-L-cysteine + [acceptor protein]-L-lysine = [E2 ubiquitin-conjugating enzyme]-L-cysteine + N(6)-ubiquitinyl-[acceptor protein]-L-lysine.. It participates in protein modification; protein ubiquitination. In terms of biological role, E3 ubiquitin-protein ligase that acts as a negative regulator of mTORC1 signaling by mediating ubiquitination of RagA/RRAGA and RHEB. Catalyzes 'Lys-63'-linked polyubiquitination of RagA/RRAGA in response to amino acid starvation, thereby regulating mTORC1 signaling. Also mediates monoubiquitination of RHEB, promoting its association with the TSC-TBC complex and subsequent inhibition. Also mediates 'Lys-48'-linked polyubiquitination of target proteins and their subsequent targeting to the proteasome for degradation. The polypeptide is E3 ubiquitin-protein ligase rnf152 (Danio rerio (Zebrafish)).